A 236-amino-acid polypeptide reads, in one-letter code: Thymidylate kinase (236 aa).

ATP is bound at residue 9–16; that stretch reads GPEGSGKS.

It belongs to the thymidylate kinase family.

The catalysed reaction is dTMP + ATP = dTDP + ADP. Phosphorylation of dTMP to form dTDP in both de novo and salvage pathways of dTTP synthesis. The chain is Thymidylate kinase from Herpetosiphon aurantiacus (strain ATCC 23779 / DSM 785 / 114-95).